Consider the following 1416-residue polypeptide: MKDLVKFLKAQSKTSEDFDVIKIGLASPDMIRSWSFGEVKKPETINYRTFKPERDGLFCARIFGPVKDYECLCGKYKRLKHRGVICEKCGVEVTQTKVRRERMGHIELASPVAHIWFLKSLPSRIGLLLDMPLRDIERVLYFEMYIVTEPGMTDLERGQLLTEEQYLDAEDRWQDEFEAKMGAEAIQDLLKGMDLEAECEKLREELQETNSETKRKKITKRLKLLEAFVQSGNKPEWMVMTVLPVLPPDLRPLVPLDGGRFATSDLNDLYRRVINRNNRLKRLLDLIAPDIIVRNEKRMLQESVDALLDNGRRGRAITGSNRRPLKSLADMIKGKQGRFRQNLLGKRVDYSGRSVITVGPYLHLHQCGLPKKMALELFRPFIYAKLESRGYATTIKAAKKMVEREDAIVWDILAEVIREHPILLNRAPTLHRLGIQAFEPILIEGKAIQLHPLVCAAFNADFDGDQMAVHVPLTLEAQLEARALMMSTNNVLSPANGDPIIVPSQDVVLGLYYMTREKVNGKGEGMLLQDPREAEKAYRTGEAELHSRVKVRITEYVKNEAGEFDAKTTLTDTTIGRAILWMIAPKGMPYSLFNQTLGKKAISKLINEAYRRLGLKEAVMFADQIMYTGFAYAARSGSSVGIDDMEIPAKKYEIISAAEEEVAEIQEQFQSGLVTAGERYNKVIDIWAAANERVAKAMMENLSQEEVINREGNPEKQASFNSIFMMADSGARGSAAQIRQLAGMRGLMARPDGSIIETPITANFREGLNVLQYFISTHGARKGLADTALKTANSGYLTRRLVDVAQDLVIVEDDCGTHEGLVMTPLIEGGDEKVPLRELVLGRVAAEDILKPGTEEVLIPRNTLLDEKLCDVLDANSVDSVKVRSVVTCDTDFGVCAKCYGRDLARGHLINQGEAVGVIAAQSIGEPGTQLTMRTFHIGGAASAAAKESSVQVKNTGTVHLMNAKFVTNDESKLVLTSRNTELTITDAFGRTKEHYKVPYGAVLSKGDGQEVTAGETIANWDPHTMPVVSEVSGFVKFVDIIDGLTVTRQTDELTGLSSIVVQDVGERATAGKDLRPTIKLVDANGNDIFLPETDVLAQYFLPGKAIVSLDDGAAVKVGEPLARIPQESVGTKDITGGLPRVADLFEARKPKEPAILAEISGIVSFGKETKGKRRLLITPAEGETYEEMIPKWRQLNVFEGEMVQRGDVISDGAETPHDILRLRGVRAVTEYIVNEVQDVYRLQGVKINDKHIEVIVRQMLRKAVITKAYDSEFLEGEQVEVARVKIVNRQREAEGKPPVEFERELLGITKASLATESFISAASFQETTRVLTEAAVAGKRDELRGLKENVIVGRLIPAGTGFAYHQNRHKHRLVDDVVAKLSEEDEAAIADEFVMTADDASANLAEMLNMADDAE.

Positions 71, 73, 86, and 89 each coordinate Zn(2+). Mg(2+) contacts are provided by D461, D463, and D465. Residues C815, C889, C896, and C899 each contribute to the Zn(2+) site.

The protein belongs to the RNA polymerase beta' chain family. As to quaternary structure, the RNAP catalytic core consists of 2 alpha, 1 beta, 1 beta' and 1 omega subunit. When a sigma factor is associated with the core the holoenzyme is formed, which can initiate transcription. Mg(2+) is required as a cofactor. It depends on Zn(2+) as a cofactor.

It catalyses the reaction RNA(n) + a ribonucleoside 5'-triphosphate = RNA(n+1) + diphosphate. DNA-dependent RNA polymerase catalyzes the transcription of DNA into RNA using the four ribonucleoside triphosphates as substrates. This is DNA-directed RNA polymerase subunit beta' from Haemophilus influenzae (strain PittGG).